A 183-amino-acid polypeptide reads, in one-letter code: Archaemetzincin (183 aa).

H131 lines the Zn(2+) pocket. The active-site Proton acceptor is E132. The Zn(2+) site is built by H135, H141, C142, C147, C166, and C169.

This sequence belongs to the peptidase M54 family. In terms of assembly, monomer. The cofactor is Zn(2+).

In terms of biological role, probable zinc metalloprotease whose natural substrate is unknown. This chain is Archaemetzincin, found in Saccharolobus islandicus (strain Y.N.15.51 / Yellowstone #2) (Sulfolobus islandicus).